Consider the following 594-residue polypeptide: Shugoshin (594 aa).

Positions 38–61 form a coiled coil; sequence KITDMETKVSELVQENVSLRSRLS. 4 disordered regions span residues 104 to 178, 201 to 266, 342 to 380, and 519 to 549; these read SGIH…KSSR, QLPI…TNKN, SKIKHSMKHPRTKLKGGQDDIMPHTDYDKDDEKRERRTR, and TKQQAIENNSSDPNVSDENENSNVKPTRTKQ. Residues 220–240 are a coiled coil; that stretch reads EEESQENKHTKEEREDEGKEN. Residues 224 to 239 are compositionally biased toward basic and acidic residues; it reads QENKHTKEEREDEGKE. Over residues 252-261 the composition is skewed to polar residues; the sequence is SVTNTGTECS. A compositionally biased stretch (basic residues) spans 343–355; that stretch reads KIKHSMKHPRTKL. The segment covering 357–376 has biased composition (basic and acidic residues); it reads GGQDDIMPHTDYDKDDEKRE. Polar residues-rich tracts occupy residues 519 to 532 and 539 to 549; these read TKQQAIENNSSDPN and NSNVKPTRTKQ.

It belongs to the shugoshin family.

Its subcellular location is the nucleus. It is found in the chromosome. The protein localises to the centromere. In terms of biological role, plays a central role in chromosome cohesion during cell division by preventing premature dissociation of cohesin complex from centromeres after prophase, when most of cohesin complex dissociates from chromosomes arms. The chain is Shugoshin (SGO1) from Kluyveromyces lactis (strain ATCC 8585 / CBS 2359 / DSM 70799 / NBRC 1267 / NRRL Y-1140 / WM37) (Yeast).